A 156-amino-acid chain; its full sequence is Endoribonuclease YbeY (156 aa).

Residues His-117, His-121, and His-127 each contribute to the Zn(2+) site.

The protein belongs to the endoribonuclease YbeY family. Zn(2+) is required as a cofactor.

The protein resides in the cytoplasm. Single strand-specific metallo-endoribonuclease involved in late-stage 70S ribosome quality control and in maturation of the 3' terminus of the 16S rRNA. In Herminiimonas arsenicoxydans, this protein is Endoribonuclease YbeY.